We begin with the raw amino-acid sequence, 110 residues long: UPF0060 membrane protein RPA3838 (110 aa).

Transmembrane regions (helical) follow at residues 4–24 (LLTFCAAALMEIAGCFAFWAW), 31–51 (PLWLIPGMLALALFAYLLTLA), 59–79 (AYAAYGGIYIASALLWGWAIE), and 85–105 (QWDVIGAAICLVGMSVILFGP).

The protein belongs to the UPF0060 family.

The protein localises to the cell inner membrane. This Rhodopseudomonas palustris (strain ATCC BAA-98 / CGA009) protein is UPF0060 membrane protein RPA3838.